The sequence spans 302 residues: MTLPLTFSPEVAEARAAGAPLVALESTIITHGMPYPQNLDTARAVEAEVRAAGAVPATIAIMDGRMHIGLTGTELEVLAQADGVAKLSRADLAACLARGGVGATTVAATMICAALAGIHVFATGGIGGVHKGAEDTFDISADLRELAHTPVTVIAAGAKAILDLPKTLEVLETLGVPVIAHGQDAFPAFWSRDSGLPAPLRADSATEIARAHLMRSKLGLPGGQLVANPIPEDAEIPASTLAPLIVQAQSEADAKGVARKAVTPFLLNRLFELTDGATLASNIALVLNNARLGAAVARALTT.

Glutamate 25 acts as the Proton donor in catalysis. Lysine 86 and valine 106 together coordinate substrate. Aspartate 138 contributes to the Mn(2+) binding site. Residue serine 140 to aspartate 142 participates in substrate binding. Residue lysine 159 is the Nucleophile of the active site.

The protein belongs to the pseudouridine-5'-phosphate glycosidase family. Homotrimer. It depends on Mn(2+) as a cofactor.

It carries out the reaction D-ribose 5-phosphate + uracil = psi-UMP + H2O. In terms of biological role, catalyzes the reversible cleavage of pseudouridine 5'-phosphate (PsiMP) to ribose 5-phosphate and uracil. Functions biologically in the cleavage direction, as part of a pseudouridine degradation pathway. The polypeptide is Pseudouridine-5'-phosphate glycosidase (Jannaschia sp. (strain CCS1)).